The chain runs to 130 residues: Small ribosomal subunit protein uS9 (130 aa).

It belongs to the universal ribosomal protein uS9 family.

The sequence is that of Small ribosomal subunit protein uS9 from Pseudomonas putida (strain W619).